The primary structure comprises 393 residues: Phosphopentomutase (393 aa).

Asp14, Asp287, His292, Asp328, His329, and His340 together coordinate Mn(2+).

This sequence belongs to the phosphopentomutase family. It depends on Mn(2+) as a cofactor.

Its subcellular location is the cytoplasm. The enzyme catalyses 2-deoxy-alpha-D-ribose 1-phosphate = 2-deoxy-D-ribose 5-phosphate. It catalyses the reaction alpha-D-ribose 1-phosphate = D-ribose 5-phosphate. It functions in the pathway carbohydrate degradation; 2-deoxy-D-ribose 1-phosphate degradation; D-glyceraldehyde 3-phosphate and acetaldehyde from 2-deoxy-alpha-D-ribose 1-phosphate: step 1/2. Its function is as follows. Isomerase that catalyzes the conversion of deoxy-ribose 1-phosphate (dRib-1-P) and ribose 1-phosphate (Rib-1-P) to deoxy-ribose 5-phosphate (dRib-5-P) and ribose 5-phosphate (Rib-5-P), respectively. The protein is Phosphopentomutase of Geobacillus stearothermophilus (Bacillus stearothermophilus).